The following is a 1081-amino-acid chain: Histone demethylase-like protein A (1081 aa).

Residues 37-173 (QHLQHPSLPN…LSGNTDYARY (137 aa)) form a disordered region. Residues 66–81 (SPSCNESNESNGETSS) are compositionally biased toward low complexity. The segment covering 119-132 (DTSNILSGSATSVS) has biased composition (polar residues). The segment covering 141–161 (NSTPPSTVNNVPSSSSITSDS) has biased composition (low complexity). An SWIRM domain is found at 192-287 (CVTAAYACRL…FGCVEIPPAL (96 aa)). The interval 902–940 (ATAQKKKEPPCSNGFSAPVSTSAHPTDASAPARSNNSFS) is disordered. Polar residues predominate over residues 914 to 925 (NGFSAPVSTSAH). The HMG box DNA-binding region spans 969–1049 (ARTGLNPFLL…TNTEIWDRWK (81 aa)).

Belongs to the flavin monoamine oxidase family.

It is found in the nucleus. Functionally, H3K4 demethylase-like protein. Might not act as a H3K4 demethylase or is not the major H3K4 demethylase since its deletion does not affect whole genome H3K4 methylation. The sequence is that of Histone demethylase-like protein A from Aspergillus fumigatus (strain ATCC MYA-4609 / CBS 101355 / FGSC A1100 / Af293) (Neosartorya fumigata).